Here is a 143-residue protein sequence, read N- to C-terminus: Transcriptional regulator MraZ (143 aa).

2 consecutive SpoVT-AbrB domains span residues 5–47 (EYQH…PLTE) and 76–119 (AMEG…AKER).

Belongs to the MraZ family. In terms of assembly, forms oligomers.

The protein resides in the cytoplasm. It is found in the nucleoid. The sequence is that of Transcriptional regulator MraZ from Lactobacillus delbrueckii subsp. bulgaricus (strain ATCC 11842 / DSM 20081 / BCRC 10696 / JCM 1002 / NBRC 13953 / NCIMB 11778 / NCTC 12712 / WDCM 00102 / Lb 14).